The chain runs to 390 residues: EF-hand calcium-binding domain-containing protein 4A (390 aa).

Residues 1 to 27 (MSPRSTLRSPLPSRTARSSASSDTPSP) show a composition bias toward low complexity. Positions 1–37 (MSPRSTLRSPLPSRTARSSASSDTPSPGADRQDRMSK) are disordered. 2 consecutive EF-hand domains span residues 33–66 (DRMS…QELP) and 67–102 (LSPE…LVGS). Ca(2+) is bound by residues aspartate 80, aspartate 82, asparagine 84, tyrosine 86, and glutamate 91. The stretch at 173–357 (SHLQDALKEK…DDKDAHQAQK (185 aa)) forms a coiled coil. The interval 206-234 (DMESQLKEERERRQALDSMRQGDKKEQLL) is disordered.

Belongs to the EFCAB4 family.

In Danio rerio (Zebrafish), this protein is EF-hand calcium-binding domain-containing protein 4A (cracr2b).